The primary structure comprises 1217 residues: ATP-dependent helicase/nuclease subunit A (1217 aa).

The UvrD-like helicase ATP-binding domain maps to 10-475; sequence VIWTDAQWQS…IDLSQNFRSR (466 aa). An ATP-binding site is contributed by 31–38; sequence AAAGSGKT. The 311-residue stretch at 476 to 786 folds into the UvrD-like helicase C-terminal domain; it reads KEVLSTTNYI…RMMTIHSSKG (311 aa).

It belongs to the helicase family. AddA subfamily. As to quaternary structure, heterodimer of AddA and AddB/RexB. Requires Mg(2+) as cofactor.

The enzyme catalyses Couples ATP hydrolysis with the unwinding of duplex DNA by translocating in the 3'-5' direction.. It carries out the reaction ATP + H2O = ADP + phosphate + H(+). The heterodimer acts as both an ATP-dependent DNA helicase and an ATP-dependent, dual-direction single-stranded exonuclease. Recognizes the chi site generating a DNA molecule suitable for the initiation of homologous recombination. The AddA nuclease domain is required for chi fragment generation; this subunit has the helicase and 3' -&gt; 5' nuclease activities. The sequence is that of ATP-dependent helicase/nuclease subunit A from Staphylococcus aureus (strain MSSA476).